Here is a 419-residue protein sequence, read N- to C-terminus: Putative competence-damage inducible protein (419 aa).

It belongs to the CinA family.

This chain is Putative competence-damage inducible protein, found in Streptococcus agalactiae serotype Ia (strain ATCC 27591 / A909 / CDC SS700).